The chain runs to 134 residues: MDSRTGELITAPQAENGVFIWEINNPLYFKITEHSQRPFLMNHDIISIQIRFNHNIRKVMGIHKCFLDFRIWTTLQPQTGHFLRVFRYEVLKYLDSLGVISINNVIRAVDHVLYDVLENTINVTETHDIKYKFY.

The protein belongs to the geminiviridae replication enhancer protein family. As to quaternary structure, homooligomer. Interacts with the replication-associated protein (REP). Interacts with host proliferating cell nuclear antigen (PCNA). Interacts with host retinoblastoma-related protein 1 (RBR1), and may thereby deregulate the host cell cycle. Oligomerization and interaction with PCNA are necessary for optimal replication enhancement.

Increases viral DNA accumulation. Enhances infectivity and symptom expression. The protein is Replication enhancer protein of Cynanchum acutum (Little mallow).